A 624-amino-acid chain; its full sequence is Probable potassium transport system protein Kup (624 aa).

The next 12 membrane-spanning stretches (helical) occupy residues 16-36 (ALLT…SPLY), 59-79 (IISM…VMLV), 106-126 (FVAV…VITP), 147-167 (FILP…PLGT), 174-194 (FGPI…PQII), 211-231 (LIVA…LTVT), 252-272 (WFCV…ALVI), 292-312 (IPLV…VISG), 342-362 (IYMP…VLVF), 371-391 (AYGL…LIYV), 394-414 (TWWK…LLFA), and 418-438 (TKIH…IVVM).

Belongs to the HAK/KUP transporter (TC 2.A.72) family.

The protein localises to the cell membrane. The catalysed reaction is K(+)(in) + H(+)(in) = K(+)(out) + H(+)(out). Transport of potassium into the cell. Likely operates as a K(+):H(+) symporter. The chain is Probable potassium transport system protein Kup from Corynebacterium glutamicum (strain ATCC 13032 / DSM 20300 / JCM 1318 / BCRC 11384 / CCUG 27702 / LMG 3730 / NBRC 12168 / NCIMB 10025 / NRRL B-2784 / 534).